A 262-amino-acid chain; its full sequence is Acyl-[acyl-carrier-protein]--UDP-N-acetylglucosamine O-acyltransferase (262 aa).

It belongs to the transferase hexapeptide repeat family. LpxA subfamily. Homotrimer.

It is found in the cytoplasm. It carries out the reaction a (3R)-hydroxyacyl-[ACP] + UDP-N-acetyl-alpha-D-glucosamine = a UDP-3-O-[(3R)-3-hydroxyacyl]-N-acetyl-alpha-D-glucosamine + holo-[ACP]. The protein operates within glycolipid biosynthesis; lipid IV(A) biosynthesis; lipid IV(A) from (3R)-3-hydroxytetradecanoyl-[acyl-carrier-protein] and UDP-N-acetyl-alpha-D-glucosamine: step 1/6. In terms of biological role, involved in the biosynthesis of lipid A, a phosphorylated glycolipid that anchors the lipopolysaccharide to the outer membrane of the cell. This chain is Acyl-[acyl-carrier-protein]--UDP-N-acetylglucosamine O-acyltransferase, found in Shigella boydii serotype 18 (strain CDC 3083-94 / BS512).